Reading from the N-terminus, the 336-residue chain is tRNA-dihydrouridine(20/20a) synthase (336 aa).

FMN-binding positions include 24–26 (PMM) and Q77. C107 serves as the catalytic Proton donor. Residues K146, H178, 218–220 (NGG), and 240–241 (GR) contribute to the FMN site.

Belongs to the Dus family. DusA subfamily. It depends on FMN as a cofactor.

The catalysed reaction is 5,6-dihydrouridine(20) in tRNA + NADP(+) = uridine(20) in tRNA + NADPH + H(+). It catalyses the reaction 5,6-dihydrouridine(20) in tRNA + NAD(+) = uridine(20) in tRNA + NADH + H(+). The enzyme catalyses 5,6-dihydrouridine(20a) in tRNA + NADP(+) = uridine(20a) in tRNA + NADPH + H(+). It carries out the reaction 5,6-dihydrouridine(20a) in tRNA + NAD(+) = uridine(20a) in tRNA + NADH + H(+). Its function is as follows. Catalyzes the synthesis of 5,6-dihydrouridine (D), a modified base found in the D-loop of most tRNAs, via the reduction of the C5-C6 double bond in target uridines. Specifically modifies U20 and U20a in tRNAs. This Pseudomonas putida (strain ATCC 47054 / DSM 6125 / CFBP 8728 / NCIMB 11950 / KT2440) protein is tRNA-dihydrouridine(20/20a) synthase.